The following is a 360-amino-acid chain: MSLIRLNIDSFRNIQLAQLSPSSGINLIYGQNGSGKTSILEAIYFLGMGRSFRSHLSQRVINNEQDKLTLFATLNLPRGDSKIGLRRFRSGETEVKIDGEKVKRLSTLAETLPIQVITPESFSLLFEGPKSRRQFIDWGAFHSDPQFYAAWVNVRRVLKQRNQLLRNNSSYDQIQYWDREFVRYTEQVTEIRNRYVDSLNELLKGIIGEFLPQVDVKVSFTRGWDSKTDFAQLLESQYPRDLATGHTVSGPHKADLRLRVGSLPAQDALSRGQLKLLVCALRIAQGKLLKQQIDKHSIYLVDDLPSELDAQHRQLLLKQLVDTGAQVFVTAIEPAAIVDSLHTPPSRMFHVEQGRVTVIE.

An ATP-binding site is contributed by 30–37; that stretch reads GQNGSGKT.

The protein belongs to the RecF family.

The protein localises to the cytoplasm. In terms of biological role, the RecF protein is involved in DNA metabolism; it is required for DNA replication and normal SOS inducibility. RecF binds preferentially to single-stranded, linear DNA. It also seems to bind ATP. The chain is DNA replication and repair protein RecF from Shewanella sp. (strain MR-4).